The following is a 273-amino-acid chain: Glutamate racemase (273 aa).

Substrate is bound by residues 17–18 (DS) and 49–50 (YG). Cys-80 functions as the Proton donor/acceptor in the catalytic mechanism. A substrate-binding site is contributed by 81–82 (NT). The active-site Proton donor/acceptor is the Cys-190. 191 to 192 (TH) lines the substrate pocket.

Belongs to the aspartate/glutamate racemases family.

The enzyme catalyses L-glutamate = D-glutamate. It functions in the pathway cell wall biogenesis; peptidoglycan biosynthesis. Its function is as follows. Provides the (R)-glutamate required for cell wall biosynthesis. This is Glutamate racemase from Corynebacterium glutamicum (strain ATCC 13032 / DSM 20300 / JCM 1318 / BCRC 11384 / CCUG 27702 / LMG 3730 / NBRC 12168 / NCIMB 10025 / NRRL B-2784 / 534).